Reading from the N-terminus, the 145-residue chain is Basic phospholipase A2 S2-22 (145 aa).

Residues 1-19 (MYPAHLLVLLAVCVSLLGA) form the signal peptide. Positions 20–27 (SDIPPQPL) are excised as a propeptide. 7 cysteine pairs are disulfide-bonded: cysteine 38/cysteine 99, cysteine 54/cysteine 144, cysteine 56/cysteine 72, cysteine 71/cysteine 127, cysteine 78/cysteine 120, cysteine 88/cysteine 113, and cysteine 106/cysteine 118. The Ca(2+) site is built by tyrosine 55, glycine 57, and glycine 59. Residue histidine 75 is part of the active site. A Ca(2+)-binding site is contributed by aspartate 76. Aspartate 121 is an active-site residue.

It belongs to the phospholipase A2 family. Group I subfamily. D49 sub-subfamily. It depends on Ca(2+) as a cofactor. Expressed by the venom gland.

It is found in the secreted. It catalyses the reaction a 1,2-diacyl-sn-glycero-3-phosphocholine + H2O = a 1-acyl-sn-glycero-3-phosphocholine + a fatty acid + H(+). Functionally, snake venom phospholipase A2 (PLA2) that inhibits collagen-induced platelet aggregation. PLA2 catalyzes the calcium-dependent hydrolysis of the 2-acyl groups in 3-sn-phosphoglycerides. The sequence is that of Basic phospholipase A2 S2-22 from Austrelaps superbus (Lowland copperhead snake).